We begin with the raw amino-acid sequence, 258 residues long: Sec-independent protein translocase protein TatC (258 aa).

Residues serine 2–cysteine 23 lie on the Cytoplasmic side of the membrane. The helical transmembrane segment at isoleucine 24–leucine 44 threads the bilayer. Topologically, residues valine 45–threonine 75 are periplasmic. The helical transmembrane segment at phenylalanine 76 to alanine 96 threads the bilayer. Topologically, residues proline 97–serine 115 are cytoplasmic. The helical transmembrane segment at leucine 116–phenylalanine 136 threads the bilayer. Residues leucine 137–serine 156 lie on the Periplasmic side of the membrane. Residues phenylalanine 157–leucine 177 traverse the membrane as a helical segment. The Cytoplasmic segment spans residues leucine 178 to lysine 192. The chain crosses the membrane as a helical span at residues arginine 193–proline 210. Position 211 (aspartate 211) is a topological domain, periplasmic. The helical transmembrane segment at valine 212 to phenylalanine 232 threads the bilayer. Residues serine 233–glutamate 258 are Cytoplasmic-facing.

This sequence belongs to the TatC family. As to quaternary structure, the Tat system comprises two distinct complexes: a TatABC complex, containing multiple copies of TatA, TatB and TatC subunits, and a separate TatA complex, containing only TatA subunits. Substrates initially bind to the TatABC complex, which probably triggers association of the separate TatA complex to form the active translocon. TatC can form a distinct, stable, multimeric complex independent of TatA and TatB. Each of TatA, TatB and TatC are able to interact in pairs without the third partner. Interacts with the signal sequence of DmsA and DmsD.

It is found in the cell inner membrane. Functionally, part of the twin-arginine translocation (Tat) system that transports large folded proteins containing a characteristic twin-arginine motif in their signal peptide across membranes. Together with TatB, TatC is part of a receptor directly interacting with Tat signal peptides. The sequence is that of Sec-independent protein translocase protein TatC from Escherichia coli (strain K12).